The chain runs to 133 residues: Protein NrdI (133 aa).

Belongs to the NrdI family.

Functionally, probably involved in ribonucleotide reductase function. This is Protein NrdI from Cronobacter sakazakii (strain ATCC BAA-894) (Enterobacter sakazakii).